The chain runs to 430 residues: Adenylosuccinate synthetase (430 aa).

Residues 12-18 (GDEGKGK) and 40-42 (GHT) contribute to the GTP site. Asp13 functions as the Proton acceptor in the catalytic mechanism. Asp13 and Gly40 together coordinate Mg(2+). IMP is bound by residues 13-16 (DEGK), 38-41 (NAGH), Thr130, Arg144, Gln224, Thr239, and Arg303. Catalysis depends on His41, which acts as the Proton donor. 299-305 (ATTGRPR) provides a ligand contact to substrate. GTP contacts are provided by residues Arg305, 331–333 (KLD), and 413–415 (SVG).

It belongs to the adenylosuccinate synthetase family. As to quaternary structure, homodimer. Mg(2+) serves as cofactor.

The protein localises to the cytoplasm. It catalyses the reaction IMP + L-aspartate + GTP = N(6)-(1,2-dicarboxyethyl)-AMP + GDP + phosphate + 2 H(+). The protein operates within purine metabolism; AMP biosynthesis via de novo pathway; AMP from IMP: step 1/2. In terms of biological role, plays an important role in the de novo pathway of purine nucleotide biosynthesis. Catalyzes the first committed step in the biosynthesis of AMP from IMP. The chain is Adenylosuccinate synthetase from Trichlorobacter lovleyi (strain ATCC BAA-1151 / DSM 17278 / SZ) (Geobacter lovleyi).